A 244-amino-acid polypeptide reads, in one-letter code: tRNA pseudouridine synthase A (244 aa).

D52 serves as the catalytic Nucleophile. A substrate-binding site is contributed by Y110.

The protein belongs to the tRNA pseudouridine synthase TruA family. In terms of assembly, homodimer.

The catalysed reaction is uridine(38/39/40) in tRNA = pseudouridine(38/39/40) in tRNA. In terms of biological role, formation of pseudouridine at positions 38, 39 and 40 in the anticodon stem and loop of transfer RNAs. The polypeptide is tRNA pseudouridine synthase A (Pelobacter propionicus (strain DSM 2379 / NBRC 103807 / OttBd1)).